The sequence spans 466 residues: Ribulose bisphosphate carboxylase large chain (466 aa).

Position 5 is an N6,N6,N6-trimethyllysine (Lys5). Residues Asn114 and Thr164 each coordinate substrate. Lys166 (proton acceptor) is an active-site residue. Position 168 (Lys168) interacts with substrate. The Mg(2+) site is built by Lys192, Asp194, and Glu195. The residue at position 192 (Lys192) is an N6-carboxylysine. The active-site Proton acceptor is the His285. Residues Arg286, His318, and Ser370 each coordinate substrate.

Belongs to the RuBisCO large chain family. Type I subfamily. Heterohexadecamer of 8 large chains and 8 small chains; disulfide-linked. The disulfide link is formed within the large subunit homodimers. Mg(2+) is required as a cofactor. In terms of processing, the disulfide bond which can form in the large chain dimeric partners within the hexadecamer appears to be associated with oxidative stress and protein turnover.

Its subcellular location is the plastid. It is found in the chloroplast. The catalysed reaction is 2 (2R)-3-phosphoglycerate + 2 H(+) = D-ribulose 1,5-bisphosphate + CO2 + H2O. It catalyses the reaction D-ribulose 1,5-bisphosphate + O2 = 2-phosphoglycolate + (2R)-3-phosphoglycerate + 2 H(+). Its function is as follows. RuBisCO catalyzes two reactions: the carboxylation of D-ribulose 1,5-bisphosphate, the primary event in carbon dioxide fixation, as well as the oxidative fragmentation of the pentose substrate in the photorespiration process. Both reactions occur simultaneously and in competition at the same active site. The sequence is that of Ribulose bisphosphate carboxylase large chain from Cercidiphyllum japonicum (Katsura tree).